Here is a 377-residue protein sequence, read N- to C-terminus: T-protein (377 aa).

The 92-residue stretch at 1–92 (MSFMEALKDL…ESYANENQFG (92 aa)) folds into the Chorismate mutase domain. In terms of domain architecture, Prephenate/arogenate dehydrogenase spans 101–364 (HKIVIVGGYG…DYSEQFLKES (264 aa)).

This sequence in the C-terminal section; belongs to the prephenate/arogenate dehydrogenase family.

Its subcellular location is the cytoplasm. The enzyme catalyses chorismate = prephenate. It carries out the reaction prephenate + NAD(+) = 3-(4-hydroxyphenyl)pyruvate + CO2 + NADH. It functions in the pathway amino-acid biosynthesis; L-tyrosine biosynthesis; (4-hydroxyphenyl)pyruvate from prephenate (NAD(+) route): step 1/1. It participates in metabolic intermediate biosynthesis; prephenate biosynthesis; prephenate from chorismate: step 1/1. The protein is T-protein (tyrA) of Haemophilus influenzae (strain ATCC 51907 / DSM 11121 / KW20 / Rd).